Consider the following 505-residue polypeptide: Putative F-box protein At1g58310 (505 aa).

The 49-residue stretch at 7–55 (RDIISGLPDSLLCHILSFLNTKEAASTSVLAKKWRYLFASVPNLDFDDS) folds into the F-box domain.

The sequence is that of Putative F-box protein At1g58310 from Arabidopsis thaliana (Mouse-ear cress).